A 622-amino-acid chain; its full sequence is Phosphoenolpyruvate carboxykinase [GTP] (622 aa).

Substrate contacts are provided by residues Arg-86 and 220-222 (YGG). Positions 229 and 248 each coordinate Mn(2+). Ser-270 contributes to the substrate binding site. 271 to 276 (MCGKTS) lines the GTP pocket. Cys-272 is an active-site residue. Asp-289 is a Mn(2+) binding site. Residues 360-374 (ENHSGKWWRGKKDSE) are compositionally biased toward basic and acidic residues. The segment at 360–381 (ENHSGKWWRGKKDSEGNEISPS) is disordered. 384–386 (NAR) lines the substrate pocket. Residues Arg-386 and Arg-418 each contribute to the GTP site.

The protein belongs to the phosphoenolpyruvate carboxykinase [GTP] family. Mn(2+) serves as cofactor.

It localises to the cytoplasm. It carries out the reaction oxaloacetate + GTP = phosphoenolpyruvate + GDP + CO2. Its pathway is carbohydrate biosynthesis; gluconeogenesis. Catalyzes the conversion of oxaloacetate (OAA) to phosphoenolpyruvate (PEP), the rate-limiting step in the metabolic pathway that produces glucose from lactate and other precursors derived from the citric acid cycle. The protein is Phosphoenolpyruvate carboxykinase [GTP] of Thermococcus sibiricus (strain DSM 12597 / MM 739).